The sequence spans 158 residues: Cytochrome c-type biogenesis protein CcmE (158 aa).

The Cytoplasmic segment spans residues 1 to 8 (MMRHRNRR). Residues 9–29 (LATIAASAIVLVVAVGLGLMA) form a helical; Signal-anchor for type II membrane protein membrane-spanning segment. Residues 30–158 (LRSAVVFFYS…PSAAGDGDSR (129 aa)) lie on the Periplasmic side of the membrane. Positions 123 and 127 each coordinate heme. The interval 139–158 (AGVWQGEGETPSAAGDGDSR) is disordered.

This sequence belongs to the CcmE/CycJ family.

The protein resides in the cell inner membrane. Its function is as follows. Heme chaperone required for the biogenesis of c-type cytochromes. Transiently binds heme delivered by CcmC and transfers the heme to apo-cytochromes in a process facilitated by CcmF and CcmH. The sequence is that of Cytochrome c-type biogenesis protein CcmE from Maricaulis maris (strain MCS10) (Caulobacter maris).